We begin with the raw amino-acid sequence, 88 residues long: Translation initiation factor IF-1 1 (88 aa).

In terms of domain architecture, S1-like spans 1 to 72 (MAKEELIELD…TKGRINFRHK (72 aa)).

Belongs to the IF-1 family. As to quaternary structure, component of the 30S ribosomal translation pre-initiation complex which assembles on the 30S ribosome in the order IF-2 and IF-3, IF-1 and N-formylmethionyl-tRNA(fMet); mRNA recruitment can occur at any time during PIC assembly.

The protein resides in the cytoplasm. Functionally, one of the essential components for the initiation of protein synthesis. Stabilizes the binding of IF-2 and IF-3 on the 30S subunit to which N-formylmethionyl-tRNA(fMet) subsequently binds. Helps modulate mRNA selection, yielding the 30S pre-initiation complex (PIC). Upon addition of the 50S ribosomal subunit IF-1, IF-2 and IF-3 are released leaving the mature 70S translation initiation complex. The protein is Translation initiation factor IF-1 1 of Burkholderia mallei (strain ATCC 23344).